A 146-amino-acid polypeptide reads, in one-letter code: Large ribosomal subunit protein uL13 (146 aa).

The protein belongs to the universal ribosomal protein uL13 family. Part of the 50S ribosomal subunit.

Functionally, this protein is one of the early assembly proteins of the 50S ribosomal subunit, although it is not seen to bind rRNA by itself. It is important during the early stages of 50S assembly. The protein is Large ribosomal subunit protein uL13 of Sulfurisphaera tokodaii (strain DSM 16993 / JCM 10545 / NBRC 100140 / 7) (Sulfolobus tokodaii).